The chain runs to 365 residues: Phosphate acyltransferase (365 aa).

The protein belongs to the PlsX family. In terms of assembly, homodimer. Probably interacts with PlsY.

It localises to the cytoplasm. It carries out the reaction a fatty acyl-[ACP] + phosphate = an acyl phosphate + holo-[ACP]. The protein operates within lipid metabolism; phospholipid metabolism. Its function is as follows. Catalyzes the reversible formation of acyl-phosphate (acyl-PO(4)) from acyl-[acyl-carrier-protein] (acyl-ACP). This enzyme utilizes acyl-ACP as fatty acyl donor, but not acyl-CoA. The sequence is that of Phosphate acyltransferase from Klebsiella pneumoniae subsp. pneumoniae (strain ATCC 700721 / MGH 78578).